Consider the following 875-residue polypeptide: Phosphoenolpyruvate carboxylase (875 aa).

Catalysis depends on residues histidine 137 and lysine 542.

It belongs to the PEPCase type 1 family. Requires Mg(2+) as cofactor.

It carries out the reaction oxaloacetate + phosphate = phosphoenolpyruvate + hydrogencarbonate. Its function is as follows. Forms oxaloacetate, a four-carbon dicarboxylic acid source for the tricarboxylic acid cycle. The protein is Phosphoenolpyruvate carboxylase of Pseudomonas entomophila (strain L48).